The sequence spans 342 residues: S-adenosylmethionine:tRNA ribosyltransferase-isomerase (342 aa).

It belongs to the QueA family. Monomer.

It is found in the cytoplasm. The enzyme catalyses 7-aminomethyl-7-carbaguanosine(34) in tRNA + S-adenosyl-L-methionine = epoxyqueuosine(34) in tRNA + adenine + L-methionine + 2 H(+). It participates in tRNA modification; tRNA-queuosine biosynthesis. In terms of biological role, transfers and isomerizes the ribose moiety from AdoMet to the 7-aminomethyl group of 7-deazaguanine (preQ1-tRNA) to give epoxyqueuosine (oQ-tRNA). This chain is S-adenosylmethionine:tRNA ribosyltransferase-isomerase, found in Streptococcus pyogenes serotype M1.